Consider the following 583-residue polypeptide: Torsin-1A-interacting protein 1 (583 aa).

Residues 1-12 (MAGDGRRAEAVR) show a composition bias toward basic and acidic residues. 2 disordered regions span residues 1 to 254 (MAGD…RSSS) and 271 to 293 (AHDK…WAPQ). The Nuclear segment spans residues 1 to 338 (MAGDGRRAEA…NASFVKRNRW (338 aa)). Phosphoserine is present on S60. 2 stretches are compositionally biased toward basic and acidic residues: residues 74–101 (VAKE…EVRE) and 115–124 (RPQETEEMKT). Phosphoserine occurs at positions 135 and 143. M146 is modified (methionine sulfoxide). Phosphoserine is present on residues S154, S156, and S157. A compositionally biased stretch (polar residues) spans 165–174 (QTDLSQTISK). Phosphoserine occurs at positions 186 and 215. Acidic residues predominate over residues 216 to 225 (EEGETEEDDQ). Phosphothreonine is present on T220. Phosphoserine is present on residues S227, S230, and S242. Over residues 238–250 (RSRDSDESGDKTT) the composition is skewed to basic and acidic residues. Polar residues predominate over residues 277 to 287 (SVLSSGYQKTP). A Methionine sulfoxide modification is found at M301. S305 is modified (phosphoserine). K308 is covalently cross-linked (Glycyl lysine isopeptide (Lys-Gly) (interchain with G-Cter in SUMO2)). A phosphoserine mark is found at S309 and S315. The segment at 309–328 (SELGNQSPSTSSRQVTGQPQ) is disordered. Residues 339–355 (WLLPLIAALASGSFWFF) form a helical membrane-spanning segment. Topologically, residues 356–583 (STPEVETTAV…ENALKRGICL (228 aa)) are perinuclear space. Residues 356-583 (STPEVETTAV…ENALKRGICL (228 aa)) form an interaction with TOR1A region. The stretch at 359–435 (EVETTAVQEF…SEQIADAYSS (77 aa)) forms a coiled coil. N399 is a glycosylation site (N-linked (GlcNAc...) asparagine). M552 is subject to Methionine sulfoxide.

The protein belongs to the TOR1AIP family. As to quaternary structure, interacts with ATP1B4. Interacts with TOR1A (ATP-bound). Interacts with TOR1B, TOR2A and TOR3A. Interacts with VIM. Post-translationally, phosphorylated. Dephosphorylated at Ser-309 and Ser-315 by serine/threonine-protein phosphatase PP1. Expressed in muscle, liver and kidney. In terms of tissue distribution, major isoform present in liver, brain and heart (at protein level). Expressed at lower levels than isoform 4 in lung, kidney and spleen (at protein level). Similar levels of isoforms 1 and 4 are observed in ovary, testis and pancreas (at protein level). As to expression, expressed at higher levels than isoform 1 in lung, kidney and spleen (at protein level). Expressed at lower levels than isoform 1 in liver, brain and heart (at protein level). Similar levels of isoforms 1 and 4 are observed in ovary, testis and pancreas (at protein level).

It localises to the nucleus inner membrane. The protein localises to the nucleus envelope. Its subcellular location is the nucleus. Required for nuclear membrane integrity. Induces TOR1A and TOR1B ATPase activity and is required for their location on the nuclear membrane. Binds to A- and B-type lamins. Possible role in membrane attachment and assembly of the nuclear lamina. The sequence is that of Torsin-1A-interacting protein 1 (TOR1AIP1) from Homo sapiens (Human).